Here is a 307-residue protein sequence, read N- to C-terminus: MEGVVLLHKPKGMTSHDCVFKLRKILREKRIGHTGTLDPDVTGVLPICVGRATKIAQFLTSETKTYEGEVTLGFSTTTEDASGEVVETKHVDRVITRKEVEGALAALTGTIEQMPPMFSAVKVNGKKLYEYARAGQEVERPVRTITIHEFVLLDDREVFEGETISFRFRVTCSKGTYVRTLAVMIGEKLGFPSHMSHLVRTASGEFLLEDCISFEEIEENVQNGTVESIFISIDEALSKFPKMVVDEKQAEKIKNGMFLKNELQITAPFITVFDKNDRCLAIYEHHPKHPGMLKPMKVLVNNQELKL.

Catalysis depends on D38, which acts as the Nucleophile.

Belongs to the pseudouridine synthase TruB family. Type 1 subfamily.

The enzyme catalyses uridine(55) in tRNA = pseudouridine(55) in tRNA. Its function is as follows. Responsible for synthesis of pseudouridine from uracil-55 in the psi GC loop of transfer RNAs. The protein is tRNA pseudouridine synthase B of Bacillus thuringiensis (strain Al Hakam).